We begin with the raw amino-acid sequence, 486 residues long: Glutamyl-tRNA(Gln) amidotransferase subunit A (486 aa).

Catalysis depends on charge relay system residues Lys-79 and Ser-154. Ser-178 functions as the Acyl-ester intermediate in the catalytic mechanism.

This sequence belongs to the amidase family. GatA subfamily. As to quaternary structure, heterotrimer of A, B and C subunits.

The enzyme catalyses L-glutamyl-tRNA(Gln) + L-glutamine + ATP + H2O = L-glutaminyl-tRNA(Gln) + L-glutamate + ADP + phosphate + H(+). Allows the formation of correctly charged Gln-tRNA(Gln) through the transamidation of misacylated Glu-tRNA(Gln) in organisms which lack glutaminyl-tRNA synthetase. The reaction takes place in the presence of glutamine and ATP through an activated gamma-phospho-Glu-tRNA(Gln). This is Glutamyl-tRNA(Gln) amidotransferase subunit A from Dehalococcoides mccartyi (strain ATCC BAA-2266 / KCTC 15142 / 195) (Dehalococcoides ethenogenes (strain 195)).